A 278-amino-acid chain; its full sequence is Complement component 1 Q subcomponent-binding protein, mitochondrial (278 aa).

The transit peptide at 1-70 (MLPLLRCVPR…PVPCACGCGA (70 aa)) directs the protein to the mitochondrion. A C1q binding region spans residues 73 to 90 (TEGDKAFVEFLTDEIKEE). N6-acetyllysine occurs at positions 88 and 91. The interval 133–162 (NNSIPPTFDGEEEPSQGQKAEEQEPERTST) is disordered. The interval 165–209 (FVVEVTKTDGKKTLVLDCHYPEDEIGHEDEAESDIFSIKEVSFQA) is interaction with MAVS. A Phosphotyrosine modification is found at Tyr184. A phosphoserine mark is found at Ser197 and Ser201. Thr210 bears the Phosphothreonine mark.

The protein belongs to the MAM33 family. In terms of assembly, homotrimer; three monomers form a donut-shaped structure with an unusually asymmetric charge distribution on the surface. Interacts with CDK13, HRK, VTN, NFYB, ADRA1B, FOXC1, DDX21, DDX50, NCL, SRSF1 and SRSF9. Interacts with CD93; the association may represent a cell surface C1q receptor. Interacts with KRT1; the association represents a cell surface kininogen receptor. Interacts with CD209; the interaction is indicative for a C1q:C1QBP:CD209 signaling complex. Interacts with FBL and RRP1; the respective interactions with C1QBP are competitive. Probably associates with the mitoribosome. Interacts with MAVS; the interaction occurs upon viral transfection. Interacts with PPIF. Interacts with U2AF1L4. Interacts with PLEKHN1. Interacts with VGF-derived peptide TLQP-21. Interacts with MRE11 and RAD50; forming the MRC (MRE11-RAD50-C1QBP) complex that inhibits the activity of MRE11. In terms of tissue distribution, ubiquitous.

It localises to the mitochondrion matrix. Its subcellular location is the nucleus. The protein localises to the cell membrane. The protein resides in the secreted. It is found in the cytoplasm. It localises to the nucleolus. In terms of biological role, is believed to be a multifunctional and multicompartmental protein involved in inflammation and infection processes, ribosome biogenesis, protein synthesis in mitochondria, regulation of apoptosis, transcriptional regulation and pre-mRNA splicing. At the cell surface is thought to act as an endothelial receptor for plasma proteins of the complement and kallikrein-kinin cascades. Putative receptor for C1q; specifically binds to the globular 'heads' of C1q thus inhibiting C1; may perform the receptor function through a complex with C1qR/CD93. In complex with cytokeratin-1/KRT1 is a high affinity receptor for kininogen-1/HMWK. Can also bind other plasma proteins, such as coagulation factor XII leading to its autoactivation. May function to bind initially fluid kininogen-1 to the cell membrane. The secreted form may enhance both extrinsic and intrinsic coagulation pathways. It is postulated that the cell surface form requires docking with transmembrane proteins for downstream signaling which might be specific for a cell-type or response. By acting as C1q receptor is involved in chemotaxis of immature dendritic cells and neutrophils and is proposed to signal through CD209/DC-SIGN on immature dendritic cells, through integrin alpha-4/beta-1 during trophoblast invasion of the decidua, and through integrin beta-1 during endothelial cell adhesion and spreading. Signaling involved in inhibition of innate immune response is implicating the PI3K-AKT/PKB pathway. Required for protein synthesis in mitochondria. In mitochondrial translation may be involved in formation of functional 55S mitoribosomes; the function seems to involve its RNA-binding activity. Acts as a RNA modification reader, which specifically recognizes and binds mitochondrial RNAs modified by C5-methylcytosine (m5C) in response to stress, and promotes recruitment of the mitochondrial degradosome complex, leading to their degradation. May be involved in the nucleolar ribosome maturation process; the function may involve the exchange of FBL for RRP1 in the association with pre-ribosome particles. Involved in regulation of RNA splicing by inhibiting the RNA-binding capacity of SRSF1 and its phosphorylation. Is required for the nuclear translocation of splicing factor U2AF1L4. Involved in regulation of CDKN2A- and HRK-mediated apoptosis. May be involved in regulation of FOXC1 transcriptional activity and NFY/CCAAT-binding factor complex-mediated transcription. May play a role in antibacterial defense. Acts as a regulator of DNA repair via homologous recombination by inhibiting the activity of MRE11: interacts with unphosphorylated MRE11 and RAD50 in absence of DNA damage, preventing formation and activity of the MRN complex. Following DNA damage, dissociates from phosphorylated MRE11, allowing formation of the MRN complex. The protein is Complement component 1 Q subcomponent-binding protein, mitochondrial (C1qbp) of Mus musculus (Mouse).